The following is a 231-amino-acid chain: Eukaryotic translation initiation factor 4E allele A (231 aa).

Residues 1–20 show a composition bias toward basic and acidic residues; that stretch reads MAAAEMERTTSFDAAEKLKA. The interval 1-36 is disordered; sequence MAAAEMERTTSFDAAEKLKAADAGGGEVDDELEEGE. Residues 27-36 are compositionally biased toward acidic residues; it reads EVDDELEEGE. 2 EIF4G-binding regions span residues 56 to 59 and 66 to 102; these read HPLE and FDSP…NNIH. MRNA-binding positions include 74-79, Lys-106, and 124-125; these read RQTAWG and WE. Cysteines 129 and 167 form a disulfide. The tract at residues 150-159 is EIF4G-binding; it reads YTLLAMIGHQ. MRNA-binding positions include 174–179 and 219–223; these read RSKGEK and KRLDR.

This sequence belongs to the eukaryotic initiation factor 4E family. EIF4F is a multi-subunit complex, the composition of which varies with external and internal environmental conditions. It is composed of at least EIF4A, EIF4E and EIF4G. EIF4E is also known to interact with other partners. In higher plants two isoforms of EIF4F have been identified, named isoform EIF4F and isoform EIF(iso)4F. Isoform EIF4F has subunits p220 and p26, whereas isoform EIF(iso)4F has subunits p82 and p28. In terms of assembly, (Microbial infection) Interacts with viral genome-linked protein (VPg); this interaction is possible in susceptible hosts but impaired in resistant plants. Post-translationally, according to the redox status, the Cys-129-Cys-167 disulfide bridge may have a role in regulating protein function by affecting its ability to bind capped mRNA.

Its subcellular location is the nucleus. It is found in the cytoplasm. Functionally, component of the protein complex eIF4F, which is involved in the recognition of the mRNA cap, ATP-dependent unwinding of 5'-terminal secondary structure and recruitment of mRNA to the ribosome. Recognizes and binds the 7-methylguanosine-containing mRNA cap during an early step in the initiation of protein synthesis and facilitates ribosome binding by inducing the unwinding of the mRNAs secondary structures. Key component of recessive resistance to potyviruses. Its function is as follows. (Microbial infection) Susceptibility host factor required for viral infection (e.g. Potato virus Y (PVY)) by recruiting viral RNAs to the host ribosomal complex via an interaction with viral genome-linked protein (VPg). In Solanum tuberosum (Potato), this protein is Eukaryotic translation initiation factor 4E allele A.